We begin with the raw amino-acid sequence, 335 residues long: Phenylalanine--tRNA ligase alpha subunit (335 aa).

E262 contacts Mg(2+).

This sequence belongs to the class-II aminoacyl-tRNA synthetase family. Phe-tRNA synthetase alpha subunit type 1 subfamily. Tetramer of two alpha and two beta subunits. Mg(2+) serves as cofactor.

Its subcellular location is the cytoplasm. The catalysed reaction is tRNA(Phe) + L-phenylalanine + ATP = L-phenylalanyl-tRNA(Phe) + AMP + diphosphate + H(+). This is Phenylalanine--tRNA ligase alpha subunit from Prochlorococcus marinus subsp. pastoris (strain CCMP1986 / NIES-2087 / MED4).